The following is a 1074-amino-acid chain: Collagen, type I, alpha 1a (1074 aa).

Over residues 1 to 13 the composition is skewed to pro residues; sequence KSPAMPVPGPMGP. The interval 1-1010 is disordered; it reads KSPAMPVPGP…PQEKAPDPYR (1010 aa). Residues 14-36 show a composition bias toward low complexity; sequence MGPRSGPQGFPGEAGAAGAMGPR. Residues 45–59 are compositionally biased toward basic and acidic residues; sequence NGEDGESGKPGRGGE. Residues 129–147 are compositionally biased toward low complexity; the sequence is TGAAGAAGARGNDGAAGAA. Pro residues predominate over residues 149-162; that stretch reads PPGPTGPAGPPGFP. A compositionally biased stretch (gly residues) spans 163 to 181; that stretch reads GGPGAKGDAGAQGGRGPEG. Composition is skewed to low complexity over residues 182–225, 234–272, and 290–299; these read PAGA…AGAP, SGPQ…APGV, and EPGAAGARGA. A compositionally biased stretch (gly residues) spans 301 to 313; it reads GERGGPGGRGFPG. Low complexity-rich tracts occupy residues 377-392, 469-530, and 563-578; these read VGAR…PGPK, VPGE…QGMP, and RGLT…AGAT. The span at 588–597 shows a compositional bias: gly residues; that stretch reads GPVGPGGARG. Composition is skewed to low complexity over residues 611 to 647 and 661 to 683; these read AGFA…AGPT and PKGA…AGRV. Pro residues predominate over residues 685 to 697; it reads PPGPSGNPGPPGP. 2 stretches are compositionally biased toward low complexity: residues 715-742 and 803-823; these read PAGR…SEGA and PGLA…SEGS. Residues 847 to 857 show a composition bias toward pro residues; the sequence is APGPPGAPGPV. Low complexity predominate over residues 871-890; sequence PAGPAGSAGPAGPRGPAGAP. Basic and acidic residues predominate over residues 893-907; that stretch reads RGDKGESGEAGERGH. Residues 920–956 are compositionally biased toward low complexity; it reads SGSSGEQGPAGAAGPAGPRGPAGSAGSPGKDGMSGLP. Positions 974-986 are enriched in pro residues; the sequence is AGPPGPPGPPGAP. The region spanning 1014-1074 is the Fibrillar collagen NC1 domain; that stretch reads LEVDSTLKSL…GLEVGPVCFL (61 aa).

Belongs to the fibrillar collagen family.

The protein localises to the secreted. It is found in the extracellular space. It localises to the extracellular matrix. In Epinephelus marginatus (Dusky grouper), this protein is Collagen, type I, alpha 1a.